The following is a 78-amino-acid chain: MEGDIVQMGAYIGAGLACTGMGGAAVGVGHVVGNFISGALRNPSAAASQTATMFIGIAFAEALGIFSFLVALLLMFAV.

2 helical membrane passes run 12 to 32 (IGAG…GHVV) and 54 to 74 (FIGI…ALLL).

It belongs to the ATPase C chain family. F-type ATPases have 2 components, F(1) - the catalytic core - and F(0) - the membrane proton channel. F(1) has five subunits: alpha(3), beta(3), gamma(1), delta(1), epsilon(1). F(0) has four main subunits: a(1), b(1), b'(1) and c(10-14). The alpha and beta chains form an alternating ring which encloses part of the gamma chain. F(1) is attached to F(0) by a central stalk formed by the gamma and epsilon chains, while a peripheral stalk is formed by the delta, b and b' chains.

The protein resides in the cellular chromatophore membrane. Functionally, f(1)F(0) ATP synthase produces ATP from ADP in the presence of a proton or sodium gradient. F-type ATPases consist of two structural domains, F(1) containing the extramembraneous catalytic core and F(0) containing the membrane proton channel, linked together by a central stalk and a peripheral stalk. During catalysis, ATP synthesis in the catalytic domain of F(1) is coupled via a rotary mechanism of the central stalk subunits to proton translocation. Its function is as follows. Key component of the F(0) channel; it plays a direct role in translocation across the membrane. A homomeric c-ring of between 10-14 subunits forms the central stalk rotor element with the F(1) delta and epsilon subunits. The chain is ATP synthase subunit c from Rhodobacter capsulatus (Rhodopseudomonas capsulata).